The sequence spans 506 residues: Anaerobic nitric oxide reductase transcription regulator NorR (506 aa).

At Asp57 the chain carries 4-aspartylphosphate. Positions 187-416 (MIGLSPAMTQ…LEHAIHRAVV (230 aa)) constitute a Sigma-54 factor interaction domain. ATP-binding positions include 215–222 (GETGTGKE) and 278–287 (ADNGTLFLDE). Positions 481 to 500 (WAASARALETDVANLHRLAK) form a DNA-binding region, H-T-H motif.

It participates in nitrogen metabolism; nitric oxide reduction. Functionally, required for the expression of anaerobic nitric oxide (NO) reductase, acts as a transcriptional activator for at least the norVW operon. Activation also requires sigma-54. This Salmonella agona (strain SL483) protein is Anaerobic nitric oxide reductase transcription regulator NorR.